Consider the following 457-residue polypeptide: Peptidyl-prolyl cis-trans isomerase FKBP5 (457 aa).

Methionine 1 carries the post-translational modification N-acetylmethionine. Residues 1-26 (MTTDEGAKNSRGNPAATVAEQGEDVT) form a disordered region. At lysine 28 the chain carries N6-acetyllysine. PPIase FKBP-type domains lie at 50-138 (GDRV…LDFK) and 165-251 (GARV…KSFE). TPR repeat units follow at residues 268-301 (AAIVKEKGTVYFKGGKYVQAVIQYGKIVSWLEME), 317-350 (LAAFLNLAMCYLKLREYTKAVECCDKALGLDSAN), and 351-384 (EKGLYRRGEAQLLMNEFESAKGDFEKVLEVNPQN). The disordered stretch occupies residues 421-457 (AKEEANKAMSKKTSEGVTNEKLTASHAVEEEKPEGHV). Serine 445 carries the phosphoserine modification. Residues 447–457 (AVEEEKPEGHV) are compositionally biased toward basic and acidic residues.

Part of a heteromultimeric cytoplasmic complex with HSP90AA1, HSPA1A/HSPA1B and steroid receptors. Upon ligand binding dissociates from the complex and FKBP4 takes its place. Interacts with functionally mature heterooligomeric progesterone receptor complexes along with HSP90 and TEBP. Interacts with NR3C1. Interacts with Akt/AKT1 and PHLPP1; enhancing dephosphorylation and subsequent activation of Akt/AKT1. Interacts with IFI44L; this interaction modulates the kinase activity of IKBKB and IKBKE. Interacts with IKBKB and IKBKE. In terms of processing, acetylation impairs ability to promote interaction between Akt/AKT1 and PHLPP1. Deacetylation by SIRT7 promotes interaction between Akt/AKT1 and PHLPP1, leading to suppress Akt/AKT1 activation. Ubiquitinated, leading to degradation in a proteasome-dependent manner. Deubiquitinated by USP49, leading to stabilization.

It is found in the cytoplasm. Its subcellular location is the nucleus. The catalysed reaction is [protein]-peptidylproline (omega=180) = [protein]-peptidylproline (omega=0). With respect to regulation, inhibited by both FK506 and rapamycin. Functionally, immunophilin protein with PPIase and co-chaperone activities. Component of unligated steroid receptors heterocomplexes through interaction with heat-shock protein 90 (HSP90). Plays a role in the intracellular trafficking of heterooligomeric forms of steroid hormone receptors maintaining the complex into the cytoplasm when unliganded. Acts as a regulator of Akt/AKT1 activity by promoting the interaction between Akt/AKT1 and PHLPP1, thereby enhancing dephosphorylation and subsequent activation of Akt/AKT1. Interacts with IKBKE and IKBKB which facilitates IKK complex assembly leading to increased IKBKE and IKBKB kinase activity, NF-kappaB activation, and IFN production. This Saimiri boliviensis boliviensis (Bolivian squirrel monkey) protein is Peptidyl-prolyl cis-trans isomerase FKBP5 (FKBP5).